A 785-amino-acid polypeptide reads, in one-letter code: Altered inheritance of mitochondria protein 3-2 (785 aa).

Disordered stretches follow at residues 33 to 122 (TGYQ…QPYM), 142 to 406 (QQVA…SENL), and 418 to 785 (NVDV…RLHK). Residues 91-102 (GSSGNSANGSSA) are compositionally biased toward low complexity. 2 stretches are compositionally biased toward polar residues: residues 103–122 (TIPT…QPYM) and 143–199 (QVAT…QLNI). Basic and acidic residues predominate over residues 249 to 260 (KPYDWEEQKTTK). Polar residues-rich tracts occupy residues 283 to 310 (SRQG…TTTG), 350 to 366 (ATNN…QNTK), 375 to 388 (TNKS…SNVM), 395 to 405 (QMNTKANSSEN), and 455 to 465 (SSISRDNYNSI). A compositionally biased stretch (basic and acidic residues) spans 478–497 (NTGEREGAQELKADIAERSQ). The segment covering 527–556 (AQTSSDIPQKSSLVTDESNISVPNKSQQPM) has biased composition (polar residues). Composition is skewed to basic and acidic residues over residues 587 to 613 (KSLE…EQLK) and 624 to 637 (KNMK…DNKN). The span at 659 to 671 (SLTSEGNHMNLNT) shows a compositional bias: polar residues. 2 stretches are compositionally biased toward basic and acidic residues: residues 672 to 686 (EKGK…DESK) and 700 to 710 (FKREELSKEVV).

This sequence belongs to the AIM3 family.

The protein resides in the membrane raft. The protein is Altered inheritance of mitochondria protein 3-2 (AIM3-2) of Candida glabrata (strain ATCC 2001 / BCRC 20586 / JCM 3761 / NBRC 0622 / NRRL Y-65 / CBS 138) (Yeast).